A 301-amino-acid chain; its full sequence is Probable alpha-L-glutamate ligase (301 aa).

The ATP-grasp domain occupies 104–287 (LQLLSRKGIG…VAGMIYEFIE (184 aa)). ATP-binding positions include K141, 178–179 (EF), D187, and 211–213 (RSN). D248, E260, and N262 together coordinate Mg(2+). Mn(2+) contacts are provided by D248, E260, and N262.

The protein belongs to the RimK family. The cofactor is Mg(2+). Mn(2+) is required as a cofactor.

The polypeptide is Probable alpha-L-glutamate ligase (Vibrio vulnificus (strain CMCP6)).